The primary structure comprises 153 residues: Riboflavin synthase (153 aa).

It belongs to the DMRL synthase family.

The catalysed reaction is 2 6,7-dimethyl-8-(1-D-ribityl)lumazine + H(+) = 5-amino-6-(D-ribitylamino)uracil + riboflavin. It participates in cofactor biosynthesis; riboflavin biosynthesis; riboflavin from 2-hydroxy-3-oxobutyl phosphate and 5-amino-6-(D-ribitylamino)uracil: step 2/2. In Archaeoglobus fulgidus (strain ATCC 49558 / DSM 4304 / JCM 9628 / NBRC 100126 / VC-16), this protein is Riboflavin synthase (ribC).